The chain runs to 222 residues: Homing endonuclease I-ApeI (222 aa).

In terms of assembly, probably functions as a monomer. The cofactor is Mg(2+). Mn(2+) serves as cofactor.

Functionally, endonuclease involved in 16S rRNA intron I-alpha homing. Recognizes the minimal target 5'-GCAAGGCTGAAACTTAAAGG-3'; generates 4 base 3' protruding ends 5'-AAAC-3' and 5'-GTTT-3'. The polypeptide is Homing endonuclease I-ApeI (apeI) (Aeropyrum pernix (strain ATCC 700893 / DSM 11879 / JCM 9820 / NBRC 100138 / K1)).